The following is a 163-amino-acid chain: Phosphopantetheine adenylyltransferase (163 aa).

S8 contacts substrate. Residues 8-9 (SF) and H16 contribute to the ATP site. K40, T72, and R86 together coordinate substrate. ATP contacts are provided by residues 87-89 (GLR), E97, and 122-128 (HSFLSSS).

This sequence belongs to the bacterial CoaD family. In terms of assembly, homohexamer. The cofactor is Mg(2+).

The protein resides in the cytoplasm. It carries out the reaction (R)-4'-phosphopantetheine + ATP + H(+) = 3'-dephospho-CoA + diphosphate. It participates in cofactor biosynthesis; coenzyme A biosynthesis; CoA from (R)-pantothenate: step 4/5. Reversibly transfers an adenylyl group from ATP to 4'-phosphopantetheine, yielding dephospho-CoA (dPCoA) and pyrophosphate. This is Phosphopantetheine adenylyltransferase from Synechococcus sp. (strain CC9902).